The sequence spans 240 residues: Uridylate kinase (240 aa).

9-12 (KLSG) is a binding site for ATP. G51 is a binding site for UMP. The ATP site is built by G52 and R56. UMP is bound by residues D71 and 132–139 (TGNPFFTT). ATP is bound by residues T159, Y165, and D168.

It belongs to the UMP kinase family. Homohexamer.

The protein resides in the cytoplasm. The enzyme catalyses UMP + ATP = UDP + ADP. It functions in the pathway pyrimidine metabolism; CTP biosynthesis via de novo pathway; UDP from UMP (UMPK route): step 1/1. With respect to regulation, inhibited by UTP. In terms of biological role, catalyzes the reversible phosphorylation of UMP to UDP. This Synechococcus elongatus (strain ATCC 33912 / PCC 7942 / FACHB-805) (Anacystis nidulans R2) protein is Uridylate kinase.